Reading from the N-terminus, the 383-residue chain is Putative glutamate--cysteine ligase 2-2 (383 aa).

It belongs to the glutamate--cysteine ligase type 2 family. YbdK subfamily.

The catalysed reaction is L-cysteine + L-glutamate + ATP = gamma-L-glutamyl-L-cysteine + ADP + phosphate + H(+). In terms of biological role, ATP-dependent carboxylate-amine ligase which exhibits weak glutamate--cysteine ligase activity. This is Putative glutamate--cysteine ligase 2-2 from Paenarthrobacter aurescens (strain TC1).